The sequence spans 116 residues: Insulin (116 aa).

The signal sequence occupies residues 1–24 (MAALWLQSFSLLVLLVVSWPGSQA). Cystine bridges form between C32–C102, C44–C115, and C101–C106. A propeptide spans 56-93 (DVDQLLGFLPPKSGGAAAAGADNEVAEFAFKDQMEMMV) (c peptide).

The protein belongs to the insulin family. Heterodimer of a B chain and an A chain linked by two disulfide bonds.

The protein resides in the secreted. Its function is as follows. Insulin decreases blood glucose concentration. It increases cell permeability to monosaccharides, amino acids and fatty acids. It accelerates glycolysis, the pentose phosphate cycle, and glycogen synthesis in liver. The polypeptide is Insulin (ins) (Lophius americanus (American angler)).